The following is a 322-amino-acid chain: Acetyl-coenzyme A carboxylase carboxyl transferase subunit alpha (322 aa).

Residues 30–293 (ALDISAEITR…RQALQESLRK (264 aa)) enclose the CoA carboxyltransferase C-terminal domain.

The protein belongs to the AccA family. Acetyl-CoA carboxylase is a heterohexamer composed of biotin carboxyl carrier protein (AccB), biotin carboxylase (AccC) and two subunits each of ACCase subunit alpha (AccA) and ACCase subunit beta (AccD).

The protein localises to the cytoplasm. It carries out the reaction N(6)-carboxybiotinyl-L-lysyl-[protein] + acetyl-CoA = N(6)-biotinyl-L-lysyl-[protein] + malonyl-CoA. The protein operates within lipid metabolism; malonyl-CoA biosynthesis; malonyl-CoA from acetyl-CoA: step 1/1. Component of the acetyl coenzyme A carboxylase (ACC) complex. First, biotin carboxylase catalyzes the carboxylation of biotin on its carrier protein (BCCP) and then the CO(2) group is transferred by the carboxyltransferase to acetyl-CoA to form malonyl-CoA. The sequence is that of Acetyl-coenzyme A carboxylase carboxyl transferase subunit alpha from Nitrosomonas eutropha (strain DSM 101675 / C91 / Nm57).